The primary structure comprises 390 residues: Putative transposase y4qE (390 aa).

Belongs to the transposase IS1111A/IS1328/IS1533 family.

This Sinorhizobium fredii (strain NBRC 101917 / NGR234) protein is Putative transposase y4qE.